A 287-amino-acid polypeptide reads, in one-letter code: MRYAVLVTGPAGAGKSTFCASLITHAQTIGRSVHLVNLDPAADKFEYEPTIDIRDLINLEDVMEELEFGPNGGLIYCFEYLLNNLDWLEDELGAYEDDYLIIDCPGQIELYTHVPLLPRLATFLSTSLNFRTSAVYLIDSQFMQDKSKFFAGVMSAMSCMLSLGISMLCLMSKMDLVKDKKGRTKREVGRYLDPDPNLLLEDINQGTNSKFNQLNRAVVSLIEDQNIVSFLPLDVTSEDSVNTVLSHIDNMMQYGEDEEPKVPKDMDDGEFVAPPRSYNIKLIVRDR.

12–17 is a binding site for GTP; that stretch reads GAGKST. The short motif at 69 to 71 is the Gly-Pro-Asn (GPN)-loop; involved in dimer interface element; the sequence is GPN. 172 to 175 contacts GTP; that stretch reads SKMD.

This sequence belongs to the GPN-loop GTPase family. As to quaternary structure, heterodimers with GPN1 or GPN2. Binds to RNA polymerase II (RNAPII).

Small GTPase required for proper nuclear import of RNA polymerase II and III (RNAPII and RNAPIII). May act at an RNAP assembly step prior to nuclear import. This Cryptococcus neoformans var. neoformans serotype D (strain B-3501A) (Filobasidiella neoformans) protein is GPN-loop GTPase 3.